Here is a 292-residue protein sequence, read N- to C-terminus: 4-hydroxy-tetrahydrodipicolinate synthase (292 aa).

Residue T45 participates in pyruvate binding. Y133 serves as the catalytic Proton donor/acceptor. The active-site Schiff-base intermediate with substrate is the K161. I203 contacts pyruvate.

The protein belongs to the DapA family. Homotetramer; dimer of dimers.

The protein localises to the cytoplasm. The catalysed reaction is L-aspartate 4-semialdehyde + pyruvate = (2S,4S)-4-hydroxy-2,3,4,5-tetrahydrodipicolinate + H2O + H(+). Its pathway is amino-acid biosynthesis; L-lysine biosynthesis via DAP pathway; (S)-tetrahydrodipicolinate from L-aspartate: step 3/4. Catalyzes the condensation of (S)-aspartate-beta-semialdehyde [(S)-ASA] and pyruvate to 4-hydroxy-tetrahydrodipicolinate (HTPA). This chain is 4-hydroxy-tetrahydrodipicolinate synthase, found in Cronobacter sakazakii (strain ATCC BAA-894) (Enterobacter sakazakii).